The primary structure comprises 187 residues: MIIIVTGTPGVGKTVASKKLSEALNLNYLSLSQFVIENKLYTEYDELRQSYIIDEDKVKEELEKIISTSHLVIETIYPSLVSTADLVVVLRKNPFSLYNELKGRGWADIKVAENVEAEILGVISQEAREAFKDKVCEVDTTEMSTEQILNKILNKQCDGPIEWLVDTKVQRFLEELDKIISSYENDI.

ATP-binding residues include G10, G12, K13, T14, and V15. Positions 30–53 (SLSQFVIENKLYTEYDELRQSYII) are NMP. The interval 103–113 (GRGWADIKVAE) is LID. Residue R104 coordinates ATP.

It belongs to the adenylate kinase family. AK6 subfamily. Interacts with uS11. Not a structural component of 40S pre-ribosomes, but transiently interacts with them by binding to uS11.

The enzyme catalyses AMP + ATP = 2 ADP. The catalysed reaction is ATP + H2O = ADP + phosphate + H(+). Its function is as follows. Broad-specificity nucleoside monophosphate (NMP) kinase that catalyzes the reversible transfer of the terminal phosphate group between nucleoside triphosphates and monophosphates. Also has ATPase activity. Involved in the late maturation steps of the 30S ribosomal particles, specifically 16S rRNA maturation. While NMP activity is not required for ribosome maturation, ATPase activity is. Associates transiently with small ribosomal subunit protein uS11. ATP hydrolysis breaks the interaction with uS11. May temporarily remove uS11 from the ribosome to enable a conformational change of the ribosomal RNA that is needed for the final maturation step of the small ribosomal subunit. The polypeptide is Putative adenylate kinase (Saccharolobus islandicus (strain M.16.4 / Kamchatka #3) (Sulfolobus islandicus)).